The following is a 150-amino-acid chain: 3-dehydroquinate dehydratase (150 aa).

Y26 functions as the Proton acceptor in the catalytic mechanism. 3 residues coordinate substrate: N77, H83, and D90. H103 serves as the catalytic Proton donor. Substrate is bound by residues 104-105 (LS) and R114.

This sequence belongs to the type-II 3-dehydroquinase family. As to quaternary structure, homododecamer.

The enzyme catalyses 3-dehydroquinate = 3-dehydroshikimate + H2O. Its pathway is metabolic intermediate biosynthesis; chorismate biosynthesis; chorismate from D-erythrose 4-phosphate and phosphoenolpyruvate: step 3/7. Functionally, catalyzes a trans-dehydration via an enolate intermediate. The sequence is that of 3-dehydroquinate dehydratase from Yersinia pseudotuberculosis serotype O:1b (strain IP 31758).